The primary structure comprises 276 residues: DNA repair protein RecO (276 aa).

This sequence belongs to the RecO family.

In terms of biological role, involved in DNA repair and RecF pathway recombination. This Mycobacterium sp. (strain JLS) protein is DNA repair protein RecO.